Consider the following 95-residue polypeptide: UPF0213 protein YPK_3712 (95 aa).

The 76-residue stretch at 4–79 (SLWHLYLLRT…KQLSKQQKEK (76 aa)) folds into the GIY-YIG domain.

The protein belongs to the UPF0213 family.

This chain is UPF0213 protein YPK_3712, found in Yersinia pseudotuberculosis serotype O:3 (strain YPIII).